Reading from the N-terminus, the 277-residue chain is Putative protein-disulfide oxidoreductase RC0029 (277 aa).

Positions 1 to 22 (MRSIFIILIFLLFLSSCSEEKA) are cleaved as a signal peptide. The disordered stretch occupies residues 34 to 80 (EHETQNNETSKATNQEAVNSENTTESIVPANDNNQTDEVSTPASQKQ). Polar residues predominate over residues 39 to 80 (NNETSKATNQEAVNSENTTESIVPANDNNQTDEVSTPASQKQ). One can recognise a Thioredoxin domain in the interval 76-265 (ASQKQKNPAI…ISTAVDKALE (190 aa)). The cysteines at positions 118 and 121 are disulfide-linked.

Belongs to the thioredoxin family. DsbA subfamily.

Its subcellular location is the periplasm. Its function is as follows. May be required for disulfide bond formation in some proteins. This chain is Putative protein-disulfide oxidoreductase RC0029, found in Rickettsia conorii (strain ATCC VR-613 / Malish 7).